The sequence spans 440 residues: Xylose isomerase (440 aa).

Catalysis depends on residues His-101 and Asp-104. Glu-232, Glu-268, His-271, Asp-296, Asp-307, Asp-309, and Asp-339 together coordinate Mg(2+).

It belongs to the xylose isomerase family. In terms of assembly, homotetramer. The cofactor is Mg(2+).

It localises to the cytoplasm. The enzyme catalyses alpha-D-xylose = alpha-D-xylulofuranose. The polypeptide is Xylose isomerase (Salmonella paratyphi B (strain ATCC BAA-1250 / SPB7)).